A 33-amino-acid chain; its full sequence is Zinc metalloproteinase-disintegrin-like moojenin (33 aa).

Residues 8 to 33 form the Disintegrin domain; it reads PPVCGNELLEVGEECDCGTPENCQNE. The Ca(2+) site is built by Val10, Asn13, Leu15, Glu17, Glu20, and Asp23. 2 disulfides stabilise this stretch: Cys11-Cys30 and Cys24-Cys30.

This sequence belongs to the venom metalloproteinase (M12B) family. P-III subfamily. P-IIIb sub-subfamily. In terms of assembly, monomer. It depends on Zn(2+) as a cofactor. The N-terminus (from the N-terminal region of the metalloproteinase domain) is blocked. In terms of tissue distribution, expressed by the venom gland.

It is found in the secreted. With respect to regulation, the fibrinogenolytic and coagulant activities of the moojenin were abolished by preincubation with EDTA, 1,10-phenanthroline and beta-mercaptoethanol. Functionally, metalloproteinase moojenin: snake venom metalloproteinase that cleaves both alpha- and beta-chains of fibrinogen, but not the gamma-chain. Shows a coagulant activity on bovine plasma about 3.1 fold lower than crude venom. Renders the blood incoagulable when intraperitoneally administered into mice. Induces necrosis in liver and muscle, but does not cause histological alterations in mouse lungs, kidney or heart. This is Zinc metalloproteinase-disintegrin-like moojenin from Bothrops moojeni (Lance-headed viper).